Consider the following 1803-residue polypeptide: 6-methylsalicylic acid synthase (1803 aa).

The segment at 1-40 (MEVHGDEVLSVDSGVSTPPSTGSGFRRPLETPGTEIGNLN) is disordered. A compositionally biased stretch (low complexity) spans 13–24 (SGVSTPPSTGSG). Positions 44-470 (QNEVAVVGMA…GTVSHAIIEE (427 aa)) constitute a Ketosynthase family 3 (KS3) domain. Active-site for beta-ketoacyl synthase activity residues include cysteine 216, histidine 351, and histidine 391. The 314-residue stretch at 581-894 (VWVFSGHGAQ…SIAQLHCRGA (314 aa)) folds into the Malonyl-CoA:ACP transacylase (MAT) domain. Catalysis depends on serine 667, which acts as the For malonyltransferase activity. An N-terminal hotdog fold region spans residues 940–1058 (HTLLGQRVPV…GQWEAGGSKN (119 aa)). The 279-residue stretch at 940 to 1218 (HTLLGQRVPV…FSEIEGTPGS (279 aa)) folds into the PKS/mFAS DH domain. The active-site Proton acceptor; for thioesterase activity is the histidine 972. Residues 1073–1218 (ANNKLADNFS…FSEIEGTPGS (146 aa)) are C-terminal hotdog fold. Aspartate 1129 (proton donor; for thioesterase activity) is an active-site residue. Residues 1141-1262 (TSVGSTLFFD…KNVADLYCGS (122 aa)) form a required for homotetramer formation region. The 195-residue stretch at 1434–1628 (STYLITGGLG…AVAVQWTSWR (195 aa)) folds into the Ketoreductase (KR) domain. Residues 1701–1710 (ASSADAPSAA) show a composition bias toward low complexity. The disordered stretch occupies residues 1701-1721 (ASSADAPSAAPKETNEMPESI). Residues 1726-1801 (TWLDERIRDC…HLVGWFLEKM (76 aa)) form the Carrier domain. Serine 1761 is subject to O-(pantetheine 4'-phosphoryl)serine. Residues 1783–1803 (LTWSCPTVSHLVGWFLEKMGN) form a required for catalytic activity region.

In terms of assembly, homotetramer.

It carries out the reaction 3 malonyl-CoA + acetyl-CoA + NADPH + 3 H(+) = 6-methylsalicylate + 3 CO2 + NADP(+) + 4 CoA + H2O. It participates in secondary metabolite biosynthesis. 6-methylsalicylic acid synthase; part of the gene cluster that mediates the biosynthesis of terreic acid, a quinone epoxide inhibitor of Bruton's tyrosine kinase. The first step of the pathway is the synthesis of 6-methylsalicylic acid (6-MSA) by the 6-methylsalicylic acid synthase atX. In the biosynthesis of 6-MSA, atX utilizes one acetyl-CoA and three malonyl-CoAs as its substrates and catalyzes a series of programmed reactions including Claisen condensation, reduction, aldol cyclization, and the hydrolytic cleavage that yields 6-MSA. The 6-methylsalicylate 1-monooxygenase atA then catalyzes the decarboxylative hydroxylation of 6-MSA to 3-methylcatechol. The next step is the conversion of 3-methylcatechol to 3-methyl-1,2,4-benzenetriol by cytochrome P450 monooxygenase atE, which is enhanced by cytochrome P450 monooxygenase atG. Then, the epoxidase atD catalyzes the epoxidation and hydroxyl oxidation of 3-methyl-1,2,4-benzenetriol to terremutin. Lastly, GMC oxidoreductase atC oxidizes terremutin to terreic acid. In Aspergillus terreus (strain NIH 2624 / FGSC A1156), this protein is 6-methylsalicylic acid synthase.